Consider the following 975-residue polypeptide: Glycine dehydrogenase (decarboxylating) (975 aa).

Lys-723 carries the N6-(pyridoxal phosphate)lysine modification.

The protein belongs to the GcvP family. As to quaternary structure, the glycine cleavage system is composed of four proteins: P, T, L and H. It depends on pyridoxal 5'-phosphate as a cofactor.

The catalysed reaction is N(6)-[(R)-lipoyl]-L-lysyl-[glycine-cleavage complex H protein] + glycine + H(+) = N(6)-[(R)-S(8)-aminomethyldihydrolipoyl]-L-lysyl-[glycine-cleavage complex H protein] + CO2. The glycine cleavage system catalyzes the degradation of glycine. The P protein binds the alpha-amino group of glycine through its pyridoxal phosphate cofactor; CO(2) is released and the remaining methylamine moiety is then transferred to the lipoamide cofactor of the H protein. The sequence is that of Glycine dehydrogenase (decarboxylating) from Burkholderia vietnamiensis (strain G4 / LMG 22486) (Burkholderia cepacia (strain R1808)).